The sequence spans 712 residues: Polyribonucleotide nucleotidyltransferase (712 aa).

Asp487 and Asp493 together coordinate Mg(2+). Positions 554-613 (PKIITMTINPDKIRDVIGPSGKQINKIIEETGVKIDIEQDGTVFISSINQEMNDKAKKII) constitute a KH domain. An S1 motif domain is found at 623-691 (GEIYEGKVKR…KQGRVNLSRK (69 aa)).

This sequence belongs to the polyribonucleotide nucleotidyltransferase family. Mg(2+) serves as cofactor.

The protein resides in the cytoplasm. It carries out the reaction RNA(n+1) + phosphate = RNA(n) + a ribonucleoside 5'-diphosphate. Involved in mRNA degradation. Catalyzes the phosphorolysis of single-stranded polyribonucleotides processively in the 3'- to 5'-direction. The polypeptide is Polyribonucleotide nucleotidyltransferase (Bacillus cereus (strain AH820)).